Here is a 441-residue protein sequence, read N- to C-terminus: UPF0761 membrane protein RSc1559 (441 aa).

6 consecutive transmembrane segments (helical) span residues 44 to 64 (VLSL…FPMF), 101 to 121 (GLTA…MLTV), 141 to 161 (VLVF…SLSV), 182 to 202 (VVVG…LYVF), 207 to 227 (LVAW…FEIA), and 248 to 268 (FAAL…TLLG).

The protein belongs to the UPF0761 family.

It is found in the cell inner membrane. This chain is UPF0761 membrane protein RSc1559, found in Ralstonia nicotianae (strain ATCC BAA-1114 / GMI1000) (Ralstonia solanacearum).